A 289-amino-acid polypeptide reads, in one-letter code: Acetyl-coenzyme A carboxylase carboxyl transferase subunit beta (289 aa).

The CoA carboxyltransferase N-terminal domain maps to 28 to 289 (VMTKCPKCKK…QGGEMAVWQS (262 aa)). Positions 32, 35, 51, and 54 each coordinate Zn(2+). A C4-type zinc finger spans residues 32–54 (CPKCKKIMYTKEVLKNLKVCVNC).

The protein belongs to the AccD/PCCB family. As to quaternary structure, acetyl-CoA carboxylase is a heterohexamer composed of biotin carboxyl carrier protein (AccB), biotin carboxylase (AccC) and two subunits each of ACCase subunit alpha (AccA) and ACCase subunit beta (AccD). The cofactor is Zn(2+).

Its subcellular location is the cytoplasm. It catalyses the reaction N(6)-carboxybiotinyl-L-lysyl-[protein] + acetyl-CoA = N(6)-biotinyl-L-lysyl-[protein] + malonyl-CoA. It functions in the pathway lipid metabolism; malonyl-CoA biosynthesis; malonyl-CoA from acetyl-CoA: step 1/1. In terms of biological role, component of the acetyl coenzyme A carboxylase (ACC) complex. Biotin carboxylase (BC) catalyzes the carboxylation of biotin on its carrier protein (BCCP) and then the CO(2) group is transferred by the transcarboxylase to acetyl-CoA to form malonyl-CoA. This Bacillus anthracis (strain A0248) protein is Acetyl-coenzyme A carboxylase carboxyl transferase subunit beta.